The sequence spans 251 residues: Triosephosphate isomerase (251 aa).

9–11 lines the substrate pocket; that stretch reads NWK. Residue His94 is the Electrophile of the active site. Residue Glu166 is the Proton acceptor of the active site. Substrate is bound by residues Gly172, Ser211, and 232-233; that span reads GG.

It belongs to the triosephosphate isomerase family. In terms of assembly, homodimer.

The protein resides in the cytoplasm. The catalysed reaction is D-glyceraldehyde 3-phosphate = dihydroxyacetone phosphate. It functions in the pathway carbohydrate biosynthesis; gluconeogenesis. The protein operates within carbohydrate degradation; glycolysis; D-glyceraldehyde 3-phosphate from glycerone phosphate: step 1/1. In terms of biological role, involved in the gluconeogenesis. Catalyzes stereospecifically the conversion of dihydroxyacetone phosphate (DHAP) to D-glyceraldehyde-3-phosphate (G3P). In Xanthomonas campestris pv. campestris (strain 8004), this protein is Triosephosphate isomerase.